Reading from the N-terminus, the 68-residue chain is Neuronal regeneration-related protein (68 aa).

In terms of assembly, interacts with FLNA. Interacts with the latency-associated peptides (LAP) of TGFB1 and TGFB2; the interaction results in a decrease in TGFB autoinduction. Phosphorylated on Ser-59. Phosphorylation decreases stability and activity.

The protein resides in the cytoplasm. May have roles in neural function. Ectopic expression promotes axonal regeneration. Also augments motility of gliomas. May also have roles in cellular differentiation. Induces differentiation of fibroblast into myofibroblast and myofibroblast ameboid migration. Increases retinoic-acid regulation of lipid-droplet biogenesis. Down-regulates the expression of TGFB1 and TGFB2 but not of TGFB3. May play a role in the regulation of alveolar generation. The chain is Neuronal regeneration-related protein (Nrep) from Rattus norvegicus (Rat).